An 800-amino-acid chain; its full sequence is Phenylalanine--tRNA ligase beta subunit (800 aa).

One can recognise a tRNA-binding domain in the interval T39 to L154. The 76-residue stretch at A408 to S483 folds into the B5 domain. D461, D467, E470, and E471 together coordinate Mg(2+). An FDX-ACB domain is found at P708–R800.

The protein belongs to the phenylalanyl-tRNA synthetase beta subunit family. Type 1 subfamily. As to quaternary structure, tetramer of two alpha and two beta subunits. Mg(2+) is required as a cofactor.

The protein localises to the cytoplasm. It catalyses the reaction tRNA(Phe) + L-phenylalanine + ATP = L-phenylalanyl-tRNA(Phe) + AMP + diphosphate + H(+). This is Phenylalanine--tRNA ligase beta subunit from Staphylococcus aureus (strain bovine RF122 / ET3-1).